A 558-amino-acid chain; its full sequence is Armadillo repeat-containing X-linked protein 5 (558 aa).

Basic and acidic residues-rich tracts occupy residues 1 to 14 (MVDS…RGKA) and 139 to 156 (KSHD…REET). Disordered regions lie at residues 1-35 (MVDS…GKTQ) and 139-165 (KSHD…SSDE). Residues 300-339 (CKSRGFSLEPKEFDKLVALLKLTKDPFIHEIATMIMGISP) form an ARM 1 repeat. Residues 369 to 388 (HPGALSMVDDSSESSEEPKS) form a disordered region. ARM repeat units follow at residues 422-461 (IKFE…CLSK), 463-503 (HANT…NINF), and 520-558 (SELI…ILKL).

Belongs to the eutherian X-chromosome-specific Armcx family.

The protein is Armadillo repeat-containing X-linked protein 5 (ARMCX5) of Homo sapiens (Human).